The sequence spans 240 residues: 1-(5-phosphoribosyl)-5-[(5-phosphoribosylamino)methylideneamino] imidazole-4-carboxamide isomerase 2 (240 aa).

Asp8 serves as the catalytic Proton acceptor. The active-site Proton donor is Asp129.

Belongs to the HisA/HisF family.

It localises to the cytoplasm. The enzyme catalyses 1-(5-phospho-beta-D-ribosyl)-5-[(5-phospho-beta-D-ribosylamino)methylideneamino]imidazole-4-carboxamide = 5-[(5-phospho-1-deoxy-D-ribulos-1-ylimino)methylamino]-1-(5-phospho-beta-D-ribosyl)imidazole-4-carboxamide. The protein operates within amino-acid biosynthesis; L-histidine biosynthesis; L-histidine from 5-phospho-alpha-D-ribose 1-diphosphate: step 4/9. The protein is 1-(5-phosphoribosyl)-5-[(5-phosphoribosylamino)methylideneamino] imidazole-4-carboxamide isomerase 2 of Ruegeria sp. (strain TM1040) (Silicibacter sp.).